We begin with the raw amino-acid sequence, 460 residues long: tRNA modification GTPase MnmE (460 aa).

Arg-29, Glu-91, and Lys-132 together coordinate (6S)-5-formyl-5,6,7,8-tetrahydrofolate. In terms of domain architecture, TrmE-type G spans 227–383 (GISIALIGKT…LIDTIIKKCG (157 aa)). Asn-237 is a binding site for K(+). GTP-binding positions include 237–242 (NVGKSS), 256–262 (TNIPGTT), and 281–284 (DTAG). Ser-241 contacts Mg(2+). Residues Thr-256, Ile-258, and Thr-261 each contribute to the K(+) site. Thr-262 serves as a coordination point for Mg(2+). Lys-460 is a (6S)-5-formyl-5,6,7,8-tetrahydrofolate binding site.

The protein belongs to the TRAFAC class TrmE-Era-EngA-EngB-Septin-like GTPase superfamily. TrmE GTPase family. In terms of assembly, homodimer. Heterotetramer of two MnmE and two MnmG subunits. It depends on K(+) as a cofactor.

It localises to the cytoplasm. Exhibits a very high intrinsic GTPase hydrolysis rate. Involved in the addition of a carboxymethylaminomethyl (cmnm) group at the wobble position (U34) of certain tRNAs, forming tRNA-cmnm(5)s(2)U34. The polypeptide is tRNA modification GTPase MnmE (Prochlorococcus marinus (strain MIT 9301)).